The primary structure comprises 205 residues: Putative glutamine amidotransferase-like protein L716 (205 aa).

Positions M1–A176 constitute a Glutamine amidotransferase type-1 domain. Active-site for GATase activity residues include C82, H155, and D157.

The sequence is that of Putative glutamine amidotransferase-like protein L716 from Acanthamoeba polyphaga mimivirus (APMV).